The primary structure comprises 209 residues: Redox-sensing transcriptional repressor Rex (209 aa).

The H-T-H motif DNA-binding region spans 16–55 (VYIQVLTGLKRDGVEVISSEKLARACSVNPSQIRKDLAYF). NAD(+) is bound at residue 90–95 (GVGNLG).

It belongs to the transcriptional regulatory Rex family. As to quaternary structure, homodimer.

Its subcellular location is the cytoplasm. In terms of biological role, modulates transcription in response to changes in cellular NADH/NAD(+) redox state. The polypeptide is Redox-sensing transcriptional repressor Rex (Maridesulfovibrio salexigens (strain ATCC 14822 / DSM 2638 / NCIMB 8403 / VKM B-1763) (Desulfovibrio salexigens)).